The following is a 115-amino-acid chain: U3-lycotoxin-Ls1f (115 aa).

Residues 1–20 (MKFVLLFGVLLVTLFSYSSA) form the signal peptide. Residues 21–44 (EMLDDFDQADEDELLSLIEKEEAR) constitute a propeptide that is removed on maturation. Disulfide bonds link Cys48–Cys63, Cys55–Cys72, Cys62–Cys87, and Cys74–Cys85.

Belongs to the neurotoxin 19 (CSTX) family. 01 subfamily. Expressed by the venom gland.

It localises to the secreted. In Lycosa singoriensis (Wolf spider), this protein is U3-lycotoxin-Ls1f.